Reading from the N-terminus, the 87-residue chain is U-scoloptoxin(23)-Er1a (87 aa).

The N-terminal stretch at 1–29 (MSLIVVRTHSFLFVLVLLLFASVFHSVDS) is a signal peptide. The segment at 32-54 (FNPNGRYGRRDSASALSDASENK) is disordered.

Belongs to the scoloptoxin-23 family. Expressed by the venom gland.

Its subcellular location is the secreted. In Ethmostigmus rubripes (Giant centipede), this protein is U-scoloptoxin(23)-Er1a.